We begin with the raw amino-acid sequence, 295 residues long: Acetylglutamate kinase (295 aa).

Residues 70–71 (GG), R92, and N191 contribute to the substrate site.

This sequence belongs to the acetylglutamate kinase family. ArgB subfamily.

The protein localises to the cytoplasm. The catalysed reaction is N-acetyl-L-glutamate + ATP = N-acetyl-L-glutamyl 5-phosphate + ADP. It functions in the pathway amino-acid biosynthesis; L-arginine biosynthesis; N(2)-acetyl-L-ornithine from L-glutamate: step 2/4. Its function is as follows. Catalyzes the ATP-dependent phosphorylation of N-acetyl-L-glutamate. The sequence is that of Acetylglutamate kinase from Mycolicibacterium paratuberculosis (strain ATCC BAA-968 / K-10) (Mycobacterium paratuberculosis).